Consider the following 773-residue polypeptide: Disintegrin and metalloproteinase domain-containing protein 11 (773 aa).

The N-terminal stretch at 1-24 is a signal peptide; it reads MRRLRRWAIAALLLLPLLPPPGLG. Positions 25-229 are excised as a propeptide; that stretch reads ALGPRGALHW…PNWPKLRRKR (205 aa). Residues 36-82 form a disordered region; that stretch reads SSAHVGSPESPEGSEVTEPSRLVRQSSGGEVRKPQLDTRVRQDPPRG. Basic and acidic residues predominate over residues 65–79; it reads EVRKPQLDTRVRQDP. Residues Asn-100 and Asn-167 are each glycosylated (N-linked (GlcNAc...) asparagine). Residues 230 to 738 lie on the Extracellular side of the membrane; that stretch reads QVRRGHPTVH…ERYKGPSGTN (509 aa). Residues 243–442 enclose the Peptidase M12B domain; that stretch reads KYVELIVIND…GGGSCLFNKP (200 aa). A required for localization to cerebellar cortex basket cell terminals. Also required for localization of KCNA1, KCNA2, DLG4 and ADAM22 to cerebellar cortex basket cell terminal perisomatic axons and pinceaux region spans residues 336 to 773; that stretch reads GRTFQSTSSG…NIRRGRSGGA (438 aa). 4 cysteine pairs are disulfide-bonded: Cys-353–Cys-437, Cys-396–Cys-421, Cys-398–Cys-405, and Cys-507–Cys-527. Residues 448–535 form the Disintegrin domain; sequence PPECGNGFVE…QCPPNLHKLD (88 aa). Residues Asn-609 and Asn-677 are each glycosylated (N-linked (GlcNAc...) asparagine). 3 disulfide bridges follow: Cys-681–Cys-696, Cys-690–Cys-702, and Cys-704–Cys-713. The EGF-like domain maps to 681–713; it reads CPGSGERRICSHHGVCSNEGKCICQPDWTGKDC. Residues 739–759 traverse the membrane as a helical segment; it reads IIIGSIAGAVLVAAIVLGGTG. Over 760 to 773 the chain is Cytoplasmic; that stretch reads WGFKNIRRGRSGGA.

In terms of assembly, interacts with LGI1 and LGI4. Interacts with KCNA1/KV1.1, KCNA2/KV1.2, DLG4/PSD-95 and ADAM22. In terms of processing, the precursor is cleaved by a furin endopeptidase. Abundantly expressed in cerebellar cortex basket cell terminals and pinceaux, weakly expressed in Purkinje cells (at protein level). Weakly expressed in the heart. Abundantly in expressed in neurons throughout the central nervous system including the telencephalon, diencephalic and brainstem nuclei, cerebellum and spinal cord. Expressed in the peripheral nervous system trigeminal and dorsal root ganglia. Expressed in the ganglion and bipolar cells of the retinae and weakly in the cornea of the eyes. Expressed in the hepatocytes of the parenchyma and hepatic lobules of the liver. Expressed in distinct focal areas in the juxtamedullary cortex of the kidney. Expressed in spermatocytes in the seminiferous tubules of the testes. Expressed in the stratum spinosum of the stratified squamous epithelia of the tongue and esophagus.

Its subcellular location is the presynaptic cell membrane. It localises to the perikaryon. It is found in the cell projection. The protein resides in the axon. Probable ligand for integrin in the brain. This is a non catalytic metalloprotease-like protein. Required for localization of the potassium channel subunit proteins KCNA1/KV1.1 and KCNA2/KV1.2 at cerebellar cortex basket cell distal terminals, is thereby involved in ephaptic inhibitory synchronization of Purkinje cell firing and response to stress. Plays a role in spatial learning and motor coordination. Involved in the nociceptive pain response to chemical-derived stimulation. In Mus musculus (Mouse), this protein is Disintegrin and metalloproteinase domain-containing protein 11 (Adam11).